Here is a 122-residue protein sequence, read N- to C-terminus: Large ribosomal subunit protein uL14 (122 aa).

The protein belongs to the universal ribosomal protein uL14 family. As to quaternary structure, part of the 50S ribosomal subunit. Forms a cluster with proteins L3 and L19. In the 70S ribosome, L14 and L19 interact and together make contacts with the 16S rRNA in bridges B5 and B8.

In terms of biological role, binds to 23S rRNA. Forms part of two intersubunit bridges in the 70S ribosome. The protein is Large ribosomal subunit protein uL14 of Limosilactobacillus fermentum (strain NBRC 3956 / LMG 18251) (Lactobacillus fermentum).